Consider the following 648-residue polypeptide: Wilms tumor protein 1-interacting protein homolog (648 aa).

3 disordered regions span residues 27–56, 142–291, and 306–327; these read DGMY…KVYS, SNSL…SPRS, and SPRS…GSMS. 2 stretches are compositionally biased toward low complexity: residues 158 to 171 and 178 to 192; these read SPRS…SSQD and PRSS…LVSP. Polar residues-rich tracts occupy residues 197–213 and 220–241; these read GTSV…TASD and PRTS…TSGI. Positions 252-267 are enriched in low complexity; sequence PRSSTTSPRSSYSDSR. LIM zinc-binding domains are found at residues 437–498, 502–561, and 562–631; these read GICV…SGFQ, EKCF…TVFA, and PKCA…RLKT.

This sequence belongs to the zyxin/ajuba family.

Its subcellular location is the cell junction. The protein resides in the adherens junction. It is found in the nucleus. May monitor slit diaphragm protein assembly, a specialized adherens junction characteristic of podocytes. In case of podocyte injury, it shuttles into the nucleus and acts as a transcription regulator. Plays a role in the regulation of cell morphology and cytoskeletal organization. Acts as a transcriptional corepressor for snai1 and snai2/slug and plays a role in regulating neural crest development. This chain is Wilms tumor protein 1-interacting protein homolog (wtip), found in Danio rerio (Zebrafish).